Reading from the N-terminus, the 342-residue chain is Thioredoxin reductase 2, mitochondrial (342 aa).

The N-terminal 23 residues, 1 to 23 (MIKHIVSPFRTNFVGISKSVLSR), are a transit peptide targeting the mitochondrion. FAD is bound by residues 34 to 37 (SGPA), 56 to 68 (EGMM…AGGQ), 63 to 64 (IA), Gln68, Asn77, Val110, Cys168, Asp311, 311 to 320 (DVQDSRYRQA), and 318 to 320 (RQA). Cys165 and Cys168 are disulfide-bonded.

The protein belongs to the class-II pyridine nucleotide-disulfide oxidoreductase family. As to quaternary structure, homodimer. FAD serves as cofactor.

The protein resides in the mitochondrion. It carries out the reaction [thioredoxin]-dithiol + NADP(+) = [thioredoxin]-disulfide + NADPH + H(+). Its function is as follows. Acts on mitochondrial thioredoxin 3. Implicated in the defense against oxidative stress. The chain is Thioredoxin reductase 2, mitochondrial from Saccharomyces cerevisiae (strain ATCC 204508 / S288c) (Baker's yeast).